The sequence spans 223 residues: Thiamine-phosphate synthase (223 aa).

4-amino-2-methyl-5-(diphosphooxymethyl)pyrimidine contacts are provided by residues 42–46 (QLRDK) and Asn83. 2 residues coordinate Mg(2+): Asp84 and Asp103. Residue Ser122 coordinates 4-amino-2-methyl-5-(diphosphooxymethyl)pyrimidine. 148–150 (TPT) is a 2-[(2R,5Z)-2-carboxy-4-methylthiazol-5(2H)-ylidene]ethyl phosphate binding site. Position 151 (Lys151) interacts with 4-amino-2-methyl-5-(diphosphooxymethyl)pyrimidine. Gly179 serves as a coordination point for 2-[(2R,5Z)-2-carboxy-4-methylthiazol-5(2H)-ylidene]ethyl phosphate.

It belongs to the thiamine-phosphate synthase family. Mg(2+) serves as cofactor.

It catalyses the reaction 2-[(2R,5Z)-2-carboxy-4-methylthiazol-5(2H)-ylidene]ethyl phosphate + 4-amino-2-methyl-5-(diphosphooxymethyl)pyrimidine + 2 H(+) = thiamine phosphate + CO2 + diphosphate. It carries out the reaction 2-(2-carboxy-4-methylthiazol-5-yl)ethyl phosphate + 4-amino-2-methyl-5-(diphosphooxymethyl)pyrimidine + 2 H(+) = thiamine phosphate + CO2 + diphosphate. The catalysed reaction is 4-methyl-5-(2-phosphooxyethyl)-thiazole + 4-amino-2-methyl-5-(diphosphooxymethyl)pyrimidine + H(+) = thiamine phosphate + diphosphate. It participates in cofactor biosynthesis; thiamine diphosphate biosynthesis; thiamine phosphate from 4-amino-2-methyl-5-diphosphomethylpyrimidine and 4-methyl-5-(2-phosphoethyl)-thiazole: step 1/1. Functionally, condenses 4-methyl-5-(beta-hydroxyethyl)thiazole monophosphate (THZ-P) and 2-methyl-4-amino-5-hydroxymethyl pyrimidine pyrophosphate (HMP-PP) to form thiamine monophosphate (TMP). This chain is Thiamine-phosphate synthase, found in Mycolicibacterium paratuberculosis (strain ATCC BAA-968 / K-10) (Mycobacterium paratuberculosis).